The primary structure comprises 1345 residues: Mediator of RNA polymerase II transcription subunit 13 (1345 aa).

2 disordered regions span residues 363 to 387 (KSQT…SPYP) and 402 to 537 (FMAS…AESG). The span at 364-375 (SQTNQQQTSSNS) shows a compositional bias: low complexity. Residues 406–415 (PSVSGNSNEL) show a composition bias toward polar residues. Positions 469–482 (LFGEEDEDEDDADL) are enriched in acidic residues. Polar residues predominate over residues 486-501 (SNNDSTGESNANNSKG).

Belongs to the Mediator complex subunit 13 family. In terms of assembly, component of the SRB8-11 complex, which itself associates with the Mediator complex.

It is found in the nucleus. Component of the SRB8-11 complex. The SRB8-11 complex is a regulatory module of the Mediator complex which is itself involved in regulation of basal and activated RNA polymerase II-dependent transcription. The SRB8-11 complex may be involved in the transcriptional repression of a subset of genes regulated by Mediator. It may inhibit the association of the Mediator complex with RNA polymerase II to form the holoenzyme complex. The protein is Mediator of RNA polymerase II transcription subunit 13 (SSN2) of Candida glabrata (strain ATCC 2001 / BCRC 20586 / JCM 3761 / NBRC 0622 / NRRL Y-65 / CBS 138) (Yeast).